Reading from the N-terminus, the 200-residue chain is Small ribosomal subunit protein eS1 (200 aa).

It belongs to the eukaryotic ribosomal protein eS1 family. In terms of assembly, part of the 30S ribosomal subunit.

This is Small ribosomal subunit protein eS1 from Thermococcus kodakarensis (strain ATCC BAA-918 / JCM 12380 / KOD1) (Pyrococcus kodakaraensis (strain KOD1)).